A 596-amino-acid polypeptide reads, in one-letter code: Serine/threonine-protein kinase PknH (596 aa).

Residues 1–373 lie on the Cytoplasmic side of the membrane; that stretch reads MSDAQDSRVG…QTPRKTNPWP (373 aa). In terms of domain architecture, Protein kinase spans 16-276; that stretch reads YHLKRLLGRG…DLALAAHEAL (261 aa). ATP-binding positions include 22 to 30 and lysine 45; that span reads LGRGGMGEV. The active-site Proton acceptor is aspartate 139. Threonine 170 is subject to Phosphothreonine. A disordered region spans residues 292–368; the sequence is QESTLPGTAA…PSPWAQTPRK (77 aa). Positions 307 to 318 are enriched in pro residues; the sequence is PTMPTVTPPPIQ. The helical transmembrane segment at 374 to 394 threads the bilayer; that stretch reads LVAGAAAVVLVLVLGAIGIWI. Residues 395-596 lie on the Extracellular side of the membrane; the sequence is ANRPKPVQPP…AKIVDKVNKE (202 aa).

Belongs to the protein kinase superfamily. Ser/Thr protein kinase family. Post-translationally, autophosphorylated on threonine and serine residues.

The protein localises to the cell membrane. It catalyses the reaction L-seryl-[protein] + ATP = O-phospho-L-seryl-[protein] + ADP + H(+). The catalysed reaction is L-threonyl-[protein] + ATP = O-phospho-L-threonyl-[protein] + ADP + H(+). This chain is Serine/threonine-protein kinase PknH (pknH), found in Mycobacterium bovis (strain ATCC BAA-935 / AF2122/97).